A 260-amino-acid chain; its full sequence is 4-hydroxy-tetrahydrodipicolinate reductase (260 aa).

NAD(+) is bound at residue 12-17; sequence GFRGKM. Lysine 40 serves as a coordination point for NADP(+). Residues 92–94 and 118–121 contribute to the NAD(+) site; these read GTT and APNF. Histidine 148 (proton donor/acceptor) is an active-site residue. Histidine 149 is a (S)-2,3,4,5-tetrahydrodipicolinate binding site. Lysine 152 functions as the Proton donor in the catalytic mechanism. A (S)-2,3,4,5-tetrahydrodipicolinate-binding site is contributed by 158–159; sequence GT.

The protein belongs to the DapB family.

Its subcellular location is the cytoplasm. The enzyme catalyses (S)-2,3,4,5-tetrahydrodipicolinate + NAD(+) + H2O = (2S,4S)-4-hydroxy-2,3,4,5-tetrahydrodipicolinate + NADH + H(+). It carries out the reaction (S)-2,3,4,5-tetrahydrodipicolinate + NADP(+) + H2O = (2S,4S)-4-hydroxy-2,3,4,5-tetrahydrodipicolinate + NADPH + H(+). Its pathway is amino-acid biosynthesis; L-lysine biosynthesis via DAP pathway; (S)-tetrahydrodipicolinate from L-aspartate: step 4/4. In terms of biological role, catalyzes the conversion of 4-hydroxy-tetrahydrodipicolinate (HTPA) to tetrahydrodipicolinate. This Lactococcus lactis subsp. lactis (strain IL1403) (Streptococcus lactis) protein is 4-hydroxy-tetrahydrodipicolinate reductase.